The sequence spans 321 residues: Lipoyl synthase (321 aa).

[4Fe-4S] cluster is bound by residues C68, C73, C79, C94, C98, C101, and S308. The Radical SAM core domain maps to 80–297; it reads FNHGTATFMI…KAEALAMGFT (218 aa).

It belongs to the radical SAM superfamily. Lipoyl synthase family. [4Fe-4S] cluster serves as cofactor.

The protein localises to the cytoplasm. The catalysed reaction is [[Fe-S] cluster scaffold protein carrying a second [4Fe-4S](2+) cluster] + N(6)-octanoyl-L-lysyl-[protein] + 2 oxidized [2Fe-2S]-[ferredoxin] + 2 S-adenosyl-L-methionine + 4 H(+) = [[Fe-S] cluster scaffold protein] + N(6)-[(R)-dihydrolipoyl]-L-lysyl-[protein] + 4 Fe(3+) + 2 hydrogen sulfide + 2 5'-deoxyadenosine + 2 L-methionine + 2 reduced [2Fe-2S]-[ferredoxin]. It participates in protein modification; protein lipoylation via endogenous pathway; protein N(6)-(lipoyl)lysine from octanoyl-[acyl-carrier-protein]: step 2/2. Its function is as follows. Catalyzes the radical-mediated insertion of two sulfur atoms into the C-6 and C-8 positions of the octanoyl moiety bound to the lipoyl domains of lipoate-dependent enzymes, thereby converting the octanoylated domains into lipoylated derivatives. The polypeptide is Lipoyl synthase (Salmonella arizonae (strain ATCC BAA-731 / CDC346-86 / RSK2980)).